The following is a 220-amino-acid chain: Probable transaldolase (220 aa).

Residue K87 is the Schiff-base intermediate with substrate of the active site.

The protein belongs to the transaldolase family. Type 3B subfamily.

It localises to the cytoplasm. It catalyses the reaction D-sedoheptulose 7-phosphate + D-glyceraldehyde 3-phosphate = D-erythrose 4-phosphate + beta-D-fructose 6-phosphate. Its pathway is carbohydrate degradation; pentose phosphate pathway; D-glyceraldehyde 3-phosphate and beta-D-fructose 6-phosphate from D-ribose 5-phosphate and D-xylulose 5-phosphate (non-oxidative stage): step 2/3. In terms of biological role, transaldolase is important for the balance of metabolites in the pentose-phosphate pathway. The polypeptide is Probable transaldolase (Porphyromonas gingivalis (strain ATCC 33277 / DSM 20709 / CIP 103683 / JCM 12257 / NCTC 11834 / 2561)).